The chain runs to 102 residues: MGFENSPHPPTLFLLRSILRYKPHQHRTNHNPMIVQCRSLTLPGLCCIPPYTFQQRVSTCKKPILRQIYHISSHQDRTKQSGRGRILARGKYVVSHPSDQAH.

Residues 73-102 form a disordered region; sequence SHQDRTKQSGRGRILARGKYVVSHPSDQAH.

This is Putative protein p21 (21) from Escherichia coli (Bacteriophage APSE-1).